The following is a 223-amino-acid chain: Thymine-DNA glycosylase (223 aa).

[4Fe-4S] cluster contacts are provided by Cys201, Cys208, Cys211, and Cys217.

The protein belongs to the Nth/MutY family. [4Fe-4S] cluster is required as a cofactor.

It carries out the reaction Hydrolyzes mismatched double-stranded DNA and polynucleotides, releasing free thymine.. Thymine cleavage is completely inhibited by Ni(2+), Co(2+), Zn(2+), Cu(2+) and Mn(2+). Activity is not affected by Mg(2+) and Ca(2+). DNA glycosylase that excises thymine from T/G mismatches. Also has a weak DNA glycosylase activity on uracil paired with various bases. This Aeropyrum pernix (strain ATCC 700893 / DSM 11879 / JCM 9820 / NBRC 100138 / K1) protein is Thymine-DNA glycosylase.